A 505-amino-acid polypeptide reads, in one-letter code: tRNA-2-methylthio-N(6)-dimethylallyladenosine synthase (505 aa).

The region spanning 14–132 (RTYEVRTYGC…LPVLLERARV (119 aa)) is the MTTase N-terminal domain. [4Fe-4S] cluster is bound by residues cysteine 23, cysteine 61, cysteine 95, cysteine 169, cysteine 173, and cysteine 176. The Radical SAM core domain maps to 155–386 (RESAYAAWVS…ALQEEISWDE (232 aa)). In terms of domain architecture, TRAM spans 388–456 (KKQVGRTLEL…PHHLLAEGAV (69 aa)).

It belongs to the methylthiotransferase family. MiaB subfamily. Monomer. The cofactor is [4Fe-4S] cluster.

The protein resides in the cytoplasm. The catalysed reaction is N(6)-dimethylallyladenosine(37) in tRNA + (sulfur carrier)-SH + AH2 + 2 S-adenosyl-L-methionine = 2-methylsulfanyl-N(6)-dimethylallyladenosine(37) in tRNA + (sulfur carrier)-H + 5'-deoxyadenosine + L-methionine + A + S-adenosyl-L-homocysteine + 2 H(+). Catalyzes the methylthiolation of N6-(dimethylallyl)adenosine (i(6)A), leading to the formation of 2-methylthio-N6-(dimethylallyl)adenosine (ms(2)i(6)A) at position 37 in tRNAs that read codons beginning with uridine. The sequence is that of tRNA-2-methylthio-N(6)-dimethylallyladenosine synthase from Streptomyces coelicolor (strain ATCC BAA-471 / A3(2) / M145).